Reading from the N-terminus, the 314-residue chain is Methionyl-tRNA formyltransferase (314 aa).

Residue 112 to 115 (SLLP) participates in (6S)-5,6,7,8-tetrahydrofolate binding.

The protein belongs to the Fmt family.

It catalyses the reaction L-methionyl-tRNA(fMet) + (6R)-10-formyltetrahydrofolate = N-formyl-L-methionyl-tRNA(fMet) + (6S)-5,6,7,8-tetrahydrofolate + H(+). Its function is as follows. Attaches a formyl group to the free amino group of methionyl-tRNA(fMet). The formyl group appears to play a dual role in the initiator identity of N-formylmethionyl-tRNA by promoting its recognition by IF2 and preventing the misappropriation of this tRNA by the elongation apparatus. The chain is Methionyl-tRNA formyltransferase from Buchnera aphidicola subsp. Schizaphis graminum (strain Sg).